The chain runs to 536 residues: Thiamine transport system permease protein ThiP (536 aa).

The next 12 helical transmembrane spans lie at 12–32 (WLIP…AAFL), 58–78 (FSFW…IFLA), 95–115 (LCAM…LSVY), 134–154 (FSPY…LPMA), 199–219 (VAAL…SLGG), 240–260 (PARA…LVLL), 293–313 (VLIV…IVDG), 334–354 (SLRI…MLLW), 374–394 (SGML…FLLL), 404–424 (ADGI…LKVL), 463–483 (AQAL…VALF), and 506–526 (DGAV…TVIE). Positions 56-261 (VRFSFWQAFL…VCCLGLVLLS (206 aa)) constitute an ABC transmembrane type-1 1 domain. The 195-residue stretch at 331-525 (LWTSLRIALA…LLCFLLFTVI (195 aa)) folds into the ABC transmembrane type-1 2 domain.

It belongs to the binding-protein-dependent transport system permease family. CysTW subfamily. As to quaternary structure, the complex is composed of two ATP-binding proteins (ThiQ), two transmembrane proteins (ThiP) and a solute-binding protein (ThiB).

It localises to the cell inner membrane. Its activity is regulated as follows. Transport is inhibited by the sulfhydryl-specific modifier N-ethylmaleimide. In terms of biological role, part of the ABC transporter complex ThiBPQ involved in thiamine import. Probably responsible for the translocation of the substrate across the membrane. This chain is Thiamine transport system permease protein ThiP (thiP), found in Escherichia coli (strain K12).